Reading from the N-terminus, the 337-residue chain is Ribosomal RNA small subunit methyltransferase H (337 aa).

S-adenosyl-L-methionine-binding positions include 35 to 37, Asp-54, Phe-81, Asp-102, and Gln-109; that span reads GGY. The interval 286-316 is disordered; that stretch reads PVGPSEAEAAANPRARSAKLRAGERTDAPAP. Low complexity predominate over residues 289-300; that stretch reads PSEAEAAANPRA.

The protein belongs to the methyltransferase superfamily. RsmH family.

It localises to the cytoplasm. It carries out the reaction cytidine(1402) in 16S rRNA + S-adenosyl-L-methionine = N(4)-methylcytidine(1402) in 16S rRNA + S-adenosyl-L-homocysteine + H(+). In terms of biological role, specifically methylates the N4 position of cytidine in position 1402 (C1402) of 16S rRNA. This Methylobacterium sp. (strain 4-46) protein is Ribosomal RNA small subunit methyltransferase H.